Reading from the N-terminus, the 324-residue chain is Polyketide biosynthesis acyltransferase homolog PksD (324 aa).

The active site involves Ser99.

The protein localises to the cytoplasm. It participates in antibiotic biosynthesis; bacillaene biosynthesis. Its function is as follows. Probably involved in some intermediate steps for the synthesis of the antibiotic polyketide bacillaene which is involved in secondary metabolism. This is Polyketide biosynthesis acyltransferase homolog PksD (pksD) from Bacillus subtilis (strain 168).